A 99-amino-acid chain; its full sequence is Large ribosomal subunit protein uL23 (99 aa).

As to quaternary structure, contacts protein L29, and trigger factor when it is bound to the ribosome. Part of the 50S ribosomal subunit.

Functionally, one of the early assembly proteins it binds 23S rRNA. One of the proteins that surrounds the polypeptide exit tunnel on the outside of the ribosome. Forms the main docking site for trigger factor binding to the ribosome. The protein is Large ribosomal subunit protein uL23 of Rhodopseudomonas palustris (strain ATCC BAA-98 / CGA009).